We begin with the raw amino-acid sequence, 26 residues long: Maculatin-3.1 (26 aa).

The residue at position 26 (Ala26) is an Alanine amide.

As to expression, expressed by the skin dorsal glands.

It localises to the secreted. In terms of biological role, shows antibacterial activity against S.uberis. The polypeptide is Maculatin-3.1 (Ranoidea genimaculata (Brown-spotted tree frog)).